A 127-amino-acid chain; its full sequence is MKTALLVLLVLAVATSPAWALRCHVCTNSANCKNPQVCPSNFYFCKTVTSVEPLNGNLVRKECANSCTSDYSQQGHVSSGSEVTQCCQTDLCNERLVSAAPGHALLSSVTLGLATSLSLLTVMALCL.

The first 20 residues, 1–20, serve as a signal peptide directing secretion; sequence MKTALLVLLVLAVATSPAWA. Residues 21 to 108 enclose the UPAR/Ly6 domain; sequence LRCHVCTNSA…AAPGHALLSS (88 aa). Cystine bridges form between C23/C45, C26/C32, C38/C63, C67/C86, and C87/C92. S98 is lipidated: GPI-anchor amidated serine. Positions 99-127 are cleaved as a propeptide — removed in mature form; the sequence is AAPGHALLSSVTLGLATSLSLLTVMALCL.

In terms of tissue distribution, lymphoid cells lacking Ly6d, called ALP (all-lymphoid progenitor), retain full lymphoid potential and early thymic seeding activity, whereas cells containing Ly6d, called BLP (B-cell-biased lymphoid progenitor), up-regulate the B-cell specifying factors Ebf1 and Pax5 and behave essentially as B-cell progenitors (at protein level). Thymocytes and B-cells.

It localises to the cell membrane. Functionally, may act as a specification marker at earliest stage specification of lymphocytes between B- and T-cell development. Marks the earliest stage of B-cell specification. The sequence is that of Lymphocyte antigen 6D (Ly6d) from Mus musculus (Mouse).